Reading from the N-terminus, the 417-residue chain is CinA-like protein (417 aa).

It belongs to the CinA family.

This Gloeothece citriformis (strain PCC 7424) (Cyanothece sp. (strain PCC 7424)) protein is CinA-like protein.